Reading from the N-terminus, the 109-residue chain is Iron-sulfur cluster assembly protein CyaY (109 aa).

This sequence belongs to the frataxin family.

Functionally, involved in iron-sulfur (Fe-S) cluster assembly. May act as a regulator of Fe-S biogenesis. The polypeptide is Iron-sulfur cluster assembly protein CyaY (Acidovorax ebreus (strain TPSY) (Diaphorobacter sp. (strain TPSY))).